The following is a 1744-amino-acid chain: Retrotransposon-like protein 1 (1744 aa).

3 disordered regions span residues 1-416 (MIEP…SPEE), 823-859 (READ…DQSG), and 1287-1439 (SSET…EVPS). Residues 19–30 (SSKQMESSEGSS) show a composition bias toward low complexity. Positions 31–40 (NTVEETPGSS) are enriched in polar residues. Low complexity predominate over residues 41–80 (GAQAGAQAGAQAEAQAETQVEAQAEAQAEAQVEAQVEAQA). Positions 269 to 318 (DGSNQESSDGSNHELSNGSNHESSFGSNPESSDVSNLESSGGSNQESSDG) are enriched in polar residues. A compositionally biased stretch (low complexity) spans 332-361 (SDNSNQELSDNSNQESSDSSNQSSDISNQE). Composition is skewed to acidic residues over residues 385–407 (SDQD…GEEE), 837–846 (GSDDLSESEP), and 1291–1437 (EDKE…DEEV). The next 2 membrane-spanning stretches (helical) occupy residues 1473–1493 (FFRG…LVML) and 1520–1540 (LILD…AQLL).

In terms of tissue distribution, expressed in placenta and in various tissues in late-fetal stage.

The protein localises to the membrane. In terms of biological role, plays an essential role in capillaries endothelial cells for the maintenance of feto-maternal interface and for development of the placenta. The protein is Retrotransposon-like protein 1 (Rtl1) of Mus musculus (Mouse).